A 664-amino-acid polypeptide reads, in one-letter code: Alpha-1,4-glucan:maltose-1-phosphate maltosyltransferase (664 aa).

Lys-261, Gln-321, and Asp-356 together coordinate alpha-maltose 1-phosphate. Asp-393 functions as the Nucleophile in the catalytic mechanism. Alpha-maltose 1-phosphate is bound at residue Asn-394. Glu-422 (proton donor) is an active-site residue. 533 to 534 (KY) contacts alpha-maltose 1-phosphate.

The protein belongs to the glycosyl hydrolase 13 family. GlgE subfamily. As to quaternary structure, homodimer.

It catalyses the reaction alpha-maltose 1-phosphate + [(1-&gt;4)-alpha-D-glucosyl](n) = [(1-&gt;4)-alpha-D-glucosyl](n+2) + phosphate. Its function is as follows. Maltosyltransferase that uses maltose 1-phosphate (M1P) as the sugar donor to elongate linear or branched alpha-(1-&gt;4)-glucans. Is involved in a branched alpha-glucan biosynthetic pathway from trehalose, together with TreS, Mak and GlgB. In Pseudomonas aeruginosa (strain ATCC 15692 / DSM 22644 / CIP 104116 / JCM 14847 / LMG 12228 / 1C / PRS 101 / PAO1), this protein is Alpha-1,4-glucan:maltose-1-phosphate maltosyltransferase.